Reading from the N-terminus, the 259-residue chain is uncharacterized protein (259 aa).

A coiled-coil region spans residues Val158–Glu187. Residues Thr172 to Gln181 show a composition bias toward basic and acidic residues. 2 disordered regions span residues Thr172–Ser197 and Pro217–Lys240. 2 stretches are compositionally biased toward low complexity: residues Asn182–Glu193 and Pro217–Lys226.

This is an uncharacterized protein from Acanthamoeba polyphaga mimivirus (APMV).